The sequence spans 560 residues: RNA polymerase-associated protein C651.09c (560 aa).

Disordered regions lie at residues Asp15–Tyr74 and Tyr128–Gln207. The segment covering Gly148–Arg171 has biased composition (basic and acidic residues). Over residues Asp180–Gly195 the composition is skewed to acidic residues. Ser197 bears the Phosphoserine mark. In terms of domain architecture, Plus3 spans Ser214–Lys345. Residues Ala387 to Ala456 are a coiled coil. Residues Glu440–Arg449 show a composition bias toward basic and acidic residues. Residues Glu440 to Lys486 form a disordered region. Low complexity predominate over residues Ser451–Ser480. A phosphoserine mark is found at Ser502 and Ser506.

Component of the PAF1 complex.

The protein resides in the nucleus. It is found in the nucleoplasm. The PAF1 complex is a multifunctional complex. Involved in transcription initiation via genetic interactions with TATA-binding proteins. Involved in elongation. Also has a role in transcription-coupled histone modification. Important for TATA site selection by TBP. Directly or indirectly regulates the DNA-binding properties of the TATA box-binding protein, and the relative activities of different TATA elements. This Schizosaccharomyces pombe (strain 972 / ATCC 24843) (Fission yeast) protein is RNA polymerase-associated protein C651.09c.